The primary structure comprises 228 residues: Large ribosomal subunit protein uL3 (228 aa).

The segment at 135–159 (MKSQRASHGNSRSHNVPGSIGMAQD) is disordered. Residues 140–150 (ASHGNSRSHNV) show a composition bias toward polar residues. Q158 carries the post-translational modification N5-methylglutamine.

The protein belongs to the universal ribosomal protein uL3 family. As to quaternary structure, part of the 50S ribosomal subunit. Forms a cluster with proteins L14 and L19. Post-translationally, methylated by PrmB.

One of the primary rRNA binding proteins, it binds directly near the 3'-end of the 23S rRNA, where it nucleates assembly of the 50S subunit. This chain is Large ribosomal subunit protein uL3, found in Albidiferax ferrireducens (strain ATCC BAA-621 / DSM 15236 / T118) (Rhodoferax ferrireducens).